The sequence spans 369 residues: Maltose/maltodextrin import ATP-binding protein MalK (369 aa).

The region spanning 4–234 is the ABC transporter domain; the sequence is VQLRNVTKAW…PADRFVAGFI (231 aa). Position 36–43 (36–43) interacts with ATP; the sequence is GPSGCGKS.

It belongs to the ABC transporter superfamily. Maltooligosaccharide importer (TC 3.A.1.1.1) family. In terms of assembly, the complex is composed of two ATP-binding proteins (MalK), two transmembrane proteins (MalG and MalK) and a solute-binding protein (MalE).

The protein localises to the cell inner membrane. The enzyme catalyses D-maltose(out) + ATP + H2O = D-maltose(in) + ADP + phosphate + H(+). In terms of biological role, part of the ABC transporter complex MalEFGK involved in maltose/maltodextrin import. Responsible for energy coupling to the transport system. This is Maltose/maltodextrin import ATP-binding protein MalK from Salmonella paratyphi A (strain ATCC 9150 / SARB42).